The sequence spans 479 residues: MVSAPPTLQDQAFRSLVRNEVLTVSDAECLIREFFPPLFKEASTQKKPKTIMILVEHWPYPCLHVGLLIDKPNFQIFQAILDGVDTWLKRKYRPRMGRLKKVDFRDAQHHASLDMQDEREGRDYLVGTLPKKQIVEDHSRTRKERLKLFHDLSFMSSLHEDKHQTLLLEWAKERTSFLHLCCEKLEIGAVEVSKVRNVLKFLQPELIKELKLNTVGNLSKLAKFVPFIRKMRNLQKLMLVRTFGTRTFTQEEKQNISKIISLFCKLSCLRHLTIDDVYFLTDQMKELLRCLEAPLVSLKITLCQLSQSDLESFAQRWNYSQLKHLCLRGVTLTNLDVTPLRDFLKRVAANLQTLDLEDCRMDDSHFRTLLPALIKCTQLTSINLYDNDISEDVLENFLHRTTNLSQLTTEMYPAPSEVYNESNYVIVEIFIQICSELMNKLMEVRQANSVCFGSSSCYDCDNRYLYEDDGDVTLCLCQE.

The stretch at 96-124 is one LRR 1; degenerate repeat; that stretch reads MGRLKKVDFRDAQHHASLDMQDEREGRDY. One copy of the LRR 2; degenerate repeat lies at 179–203; that stretch reads HLCCEKLEIGAVEVSKVRNVLKFLQ. The LRR 3; degenerate repeat unit spans residues 204-230; it reads PELIKELKLNTVGNLSKLAKFVPFIRK. The LRR 4; degenerate repeat unit spans residues 231–265; that stretch reads MRNLQKLMLVRTFGTRTFTQEEKQNISKIISLFCK. LRR repeat units lie at residues 266 to 291, 292 to 323, 324 to 347, 348 to 375, and 376 to 400; these read LSCL…LRCL, EAPL…SQLK, HLCL…LKRV, AANL…ALIK, and CTQL…FLHR.

Belongs to the PRAME family. In terms of assembly, interacts with UHRF1. As to expression, seems to be specific to pluripotent tissues in the early embryo. Not detected in somatic tissues.

Its function is as follows. Promotes maintenance and self-renewal of pluripotent embryonic stem cells (ESCs), downstream of LIF/STAT3. Maintains the pluripotency state of ESCs by repressing DNA methylation through the regulation of UHRF1 stability. Mediates the proteasomal degradation of UHRF1. Is required for the establishment of the blastocyst. This chain is Preferentially expressed antigen in melanoma-like protein 7, found in Mus musculus (Mouse).